The following is a 500-amino-acid chain: Maturase K (500 aa).

This sequence belongs to the intron maturase 2 family. MatK subfamily.

It is found in the plastid. The protein resides in the chloroplast. Usually encoded in the trnK tRNA gene intron. Probably assists in splicing its own and other chloroplast group II introns. This chain is Maturase K, found in Argentina anserina (Silverweed cinquefoil).